A 1073-amino-acid polypeptide reads, in one-letter code: TSC22 domain family protein 1 (1073 aa).

The interval 1–98 (MHQPPESTAA…SQAQLQAQPL (98 aa)) is required for interaction with TGFBR1 and promotion of TGF-beta signaling. Disordered regions lie at residues 22–110 (MAHP…KKSG), 125–205 (ISSN…PHLP), 220–288 (LHHH…SPAS), 458–486 (VTSE…SVGS), 607–628 (YSQA…QQLQ), and 742–766 (VQQP…QVVP). The segment covering 36-45 (GSASALNAAG) has biased composition (low complexity). The segment covering 58–70 (FPPPSLLQPPPPA) has biased composition (pro residues). Residues 84–100 (SLNLLSQAQLQAQPLAP) are compositionally biased toward low complexity. Residues 133–142 (EDTESYDDLD) show a composition bias toward acidic residues. The span at 220 to 240 (LHHHHQIHHGHHLQHGHHHPS) shows a compositional bias: basic residues. Over residues 257–271 (PVSRKLSTTGSSDSI) the composition is skewed to polar residues. At serine 263 the chain carries Phosphoserine. 2 stretches are compositionally biased toward low complexity: residues 272 to 288 (TPVA…SPAS) and 465 to 483 (TSGS…YTES). Residues 614–625 (VQTPLPGAPPPQ) are compositionally biased toward pro residues. The span at 742–764 (VQQPSTQVPPSVIQQGAPPSSQV) shows a compositional bias: polar residues. Residues 1006–1027 (LKEQIKELIEKNSQLEQENNLL) form a leucine-zipper region. The interval 1037 to 1073 (AQFQAQLQTGSPPATTQPQGTTQPPAQPASQGSGPTA) is disordered. The segment covering 1044-1073 (QTGSPPATTQPQGTTQPPAQPASQGSGPTA) has biased composition (low complexity).

This sequence belongs to the TSC-22/Dip/Bun family. Forms homodimers. Forms heterodimers. Component of a complex composed of TSC22D1 (via N-terminus), TGFBR1 and TGFBR2; the interaction between TSC22D1 and TGFBR1 is inhibited by SMAD7 and promoted by TGFB1. Interacts with SMAD7; the interaction requires TGF-beta and the interaction is inhibited by TGFBR1. Interacts with TPT1/fortilin; interaction results in the destabilization of TSC22D1 protein and prevents TSC22D1-mediated apoptosis. Interacts with SMAD4 (via N-terminus). Interacts with ACVRL1/ALK1, ACVR1/ALK2, BMPR1A/ALK3, ACVR1B/ALK4, BMPR1B/ALK6, ACVR2A/ACTRII, and BMPR2. Interacts with SMAD6. Interacts with TFE3; the interaction is enhanced in the presence of TGF-beta. As to quaternary structure, forms a heterodimer with TSC22D4/THG1. In terms of assembly, forms a heterodimer with TSC22D4/THG1. Interacts with histone H1-2. Interacts with GNL3. Interacts with histone H1-2. As to expression, ubiquitously expressed in adult tissues. Expressed in the postmitotic epithelial compartment at the top of intestinal mucosal villi.

It localises to the cytoplasm. It is found in the nucleus. The protein resides in the cell membrane. Its subcellular location is the mitochondrion. Its function is as follows. Transcriptional repressor. Acts on the C-type natriuretic peptide (CNP) promoter. Acts to promote CASP3-mediated apoptosis. Positively regulates TGF-beta signaling by interacting with SMAD7 which inhibits binding of SMAD7 to TGFBR1, preventing recruitment of SMURF ubiquitin ligases to TGFBR1 and inhibiting SMURF-mediated ubiquitination and degradation of TGFBR1. Contributes to enhancement of TGF-beta signaling by binding to and modulating the transcription activator activity of SMAD4. Promotes TGF-beta-induced transcription of COL1A2; via its interaction with TFE3 at E-boxes in the gene proximal promoter. Plays a role in the repression of hematopoietic precursor cell growth. Promotes IL2 deprivation-induced apoptosis in T-lymphocytes, via repression of TSC22D3/GILZ transcription and activation of the caspase cascade. In terms of biological role, may act to negatively regulate TGFB3 signaling and thereby inhibit cell death in mammary gland cells. Positively regulates cell death in response to TGFB3 during mammary gland involution. The chain is TSC22 domain family protein 1 from Homo sapiens (Human).